The sequence spans 279 residues: Release factor glutamine methyltransferase (279 aa).

2 residues coordinate S-adenosyl-L-methionine: Glu141 and Asn187. 187–190 (NPPY) provides a ligand contact to substrate.

Belongs to the protein N5-glutamine methyltransferase family. PrmC subfamily.

It catalyses the reaction L-glutaminyl-[peptide chain release factor] + S-adenosyl-L-methionine = N(5)-methyl-L-glutaminyl-[peptide chain release factor] + S-adenosyl-L-homocysteine + H(+). Functionally, methylates the class 1 translation termination release factors RF1/PrfA and RF2/PrfB on the glutamine residue of the universally conserved GGQ motif. In Corynebacterium glutamicum (strain ATCC 13032 / DSM 20300 / JCM 1318 / BCRC 11384 / CCUG 27702 / LMG 3730 / NBRC 12168 / NCIMB 10025 / NRRL B-2784 / 534), this protein is Release factor glutamine methyltransferase.